Here is a 551-residue protein sequence, read N- to C-terminus: Cu(2+) suppressing and bleomycin sensitive protein 1 (551 aa).

2 coiled-coil regions span residues 174-213 (REID…EEID) and 249-300 (NSLL…DSGK). The interval 513–551 (EEKAQNSTSSDGSDDDDNGESGIDSNSNDSEPESEYQQE) is disordered. Positions 532-541 (ESGIDSNSND) are enriched in low complexity. Residues 542 to 551 (SEPESEYQQE) are compositionally biased toward acidic residues.

This sequence belongs to the CUB1 family. As to quaternary structure, monomer. Post-translationally, phosphorylated by PKA in vitro.

Its subcellular location is the cytoplasm. The protein localises to the nucleus. Functionally, involved in bleomycin tolerance with links to DNA repair and/or proteasome function. The polypeptide is Cu(2+) suppressing and bleomycin sensitive protein 1 (CUB1) (Saccharomyces cerevisiae (strain ATCC 204508 / S288c) (Baker's yeast)).